A 371-amino-acid chain; its full sequence is Queuine tRNA-ribosyltransferase (371 aa).

Asp-90 (proton acceptor) is an active-site residue. Substrate is bound by residues Asp-90–Phe-94, Asp-144, Gln-188, and Gly-215. The tract at residues Gly-246 to Asp-252 is RNA binding. The active-site Nucleophile is Asp-265. The RNA binding; important for wobble base 34 recognition stretch occupies residues Thr-270 to Arg-274. Zn(2+) is bound by residues Cys-303, Cys-305, Cys-308, and His-334.

This sequence belongs to the queuine tRNA-ribosyltransferase family. Homodimer. Within each dimer, one monomer is responsible for RNA recognition and catalysis, while the other monomer binds to the replacement base PreQ1. Zn(2+) is required as a cofactor.

It catalyses the reaction 7-aminomethyl-7-carbaguanine + guanosine(34) in tRNA = 7-aminomethyl-7-carbaguanosine(34) in tRNA + guanine. It participates in tRNA modification; tRNA-queuosine biosynthesis. Its function is as follows. Catalyzes the base-exchange of a guanine (G) residue with the queuine precursor 7-aminomethyl-7-deazaguanine (PreQ1) at position 34 (anticodon wobble position) in tRNAs with GU(N) anticodons (tRNA-Asp, -Asn, -His and -Tyr). Catalysis occurs through a double-displacement mechanism. The nucleophile active site attacks the C1' of nucleotide 34 to detach the guanine base from the RNA, forming a covalent enzyme-RNA intermediate. The proton acceptor active site deprotonates the incoming PreQ1, allowing a nucleophilic attack on the C1' of the ribose to form the product. After dissociation, two additional enzymatic reactions on the tRNA convert PreQ1 to queuine (Q), resulting in the hypermodified nucleoside queuosine (7-(((4,5-cis-dihydroxy-2-cyclopenten-1-yl)amino)methyl)-7-deazaguanosine). The sequence is that of Queuine tRNA-ribosyltransferase from Neisseria meningitidis serogroup C (strain 053442).